The primary structure comprises 90 residues: Antitoxin VapB35 (90 aa).

A disordered region spans residues G53–Y90.

The protein belongs to the phD/YefM antitoxin family.

In terms of biological role, antitoxin component of a type II toxin-antitoxin (TA) system. Neutralizes the effect of cognate toxin VapC35. The protein is Antitoxin VapB35 (vapB35) of Mycobacterium tuberculosis (strain CDC 1551 / Oshkosh).